We begin with the raw amino-acid sequence, 424 residues long: L-threonine:uridine-5'-aldehyde transaldolase (424 aa).

Position 235 is an N6-(pyridoxal phosphate)lysine (Lys-235).

Belongs to the SHMT family. Pyridoxal 5'-phosphate is required as a cofactor.

The catalysed reaction is uridine-5'-aldehyde + L-threonine = (5'S,6'S)-C-glycyluridine + acetaldehyde. It functions in the pathway antibiotic biosynthesis. Its function is as follows. Transaldolase involved in the biosynthesis of the lipopeptidyl nucleoside antibiotic A-90289. Catalyzes the condensation of L-threonine and uridine-5'-aldehyde to form 5'-C-glycyluridine (GlyU). Forms (5'S,6'S)-GlyU. Has no activity with alternative amino acids, such as glycine or serine. This chain is L-threonine:uridine-5'-aldehyde transaldolase, found in Streptomyces sp.